Consider the following 1164-residue polypeptide: Auxin response factor 7 (1164 aa).

Positions 127-229 (FCKTLTASDT…QLLLGIRRAN (103 aa)) form a DNA-binding region, TF-B3. Disordered stretches follow at residues 451-505 (HNNL…QQQL), 536-555 (QQLQSQQHSNNNQSQSQQQQ), 570-728 (HQQP…LLQQ), 765-858 (FLSP…SSSG), and 903-930 (KSKASLTDHQLEASASGTSYGLDGGENN). Over residues 464 to 489 (LSFQTPHGGISSSNLQFNKQNQQAPM) the composition is skewed to polar residues. Residues 570 to 635 (HQQPLQQQTQ…SQQASTHHLQ (66 aa)) are compositionally biased toward low complexity. Positions 637-651 (QLVSGSMASSVITPP) are enriched in polar residues. Positions 652-671 (SSSLNQSFQQQQQQSKQLQQ) are enriched in low complexity. A compositionally biased stretch (polar residues) spans 678–710 (ASTSQSSVIETSKSSSNLMSAPPQETQFSRQVE). 2 stretches are compositionally biased toward low complexity: residues 711–728 (QQQPPGLNGQNQQTLLQQ) and 765–790 (FLSPQSQLPHHQLQSQQLQQLPTLSQ). A compositionally biased stretch (polar residues) spans 791–808 (GHQFPSSCTNNGLSTLQP). Positions 841–851 (PSSSTSPSTNN) are enriched in low complexity. The segment covering 903–921 (KSKASLTDHQLEASASGTS) has biased composition (polar residues). One can recognise a PB1 domain in the interval 1037–1130 (RTYTKVQKRG…EVQQMSLDGN (94 aa)). The interval 1145-1164 (DSGNAWRGHYDDNSATSFNR) is disordered.

Belongs to the ARF family. In terms of assembly, homodimers and heterodimers. Interacts with the auxin-responsive proteins IAA1 and IAA12 (BODENLOS). Interacts (via PB1 domain) with IAA17 (via PB1 domain). Interacts with IAA19. Interacts with ARF5. Binds to JMJ30. Binds to ATXR2 in the nucleus. As to expression, expressed in the whole plant.

The protein resides in the nucleus. Its function is as follows. Auxin response factors (ARFs) are transcriptional factors that bind specifically to the DNA sequence 5'-TGTCTC-3' found in the auxin-responsive promoter elements (AuxREs). Acts as a transcriptional activator of several tropic stimulus-induced (TSI) genes, including SAUR50. Formation of heterodimers with Aux/IAA proteins may alter their ability to modulate early auxin response genes expression. Required for differential growth responses of aerial tissues. Involved in ethylene responses. Regulates lateral root formation through direct regulation of LBD16 and/or LBD29. Functionally redundant with ARF19. Mediates embryo axis formation and vascular tissues differentiation. Functionally redundant with ARF5. Involved in cellular dedifferentiation during callus formation on callus-inducing medium (CIM) and in an ATXR2-dependent manner. The polypeptide is Auxin response factor 7 (Arabidopsis thaliana (Mouse-ear cress)).